Consider the following 88-residue polypeptide: Small ribosomal subunit protein bS16 (88 aa).

It belongs to the bacterial ribosomal protein bS16 family.

The chain is Small ribosomal subunit protein bS16 from Geobacter sulfurreducens (strain ATCC 51573 / DSM 12127 / PCA).